Here is a 100-residue protein sequence, read N- to C-terminus: Large ribosomal subunit protein uL23 (100 aa).

This sequence belongs to the universal ribosomal protein uL23 family. As to quaternary structure, part of the 50S ribosomal subunit. Contacts protein L29, and trigger factor when it is bound to the ribosome.

Functionally, one of the early assembly proteins it binds 23S rRNA. One of the proteins that surrounds the polypeptide exit tunnel on the outside of the ribosome. Forms the main docking site for trigger factor binding to the ribosome. The sequence is that of Large ribosomal subunit protein uL23 from Pectobacterium atrosepticum (strain SCRI 1043 / ATCC BAA-672) (Erwinia carotovora subsp. atroseptica).